The primary structure comprises 559 residues: 5'-AMP-activated protein kinase catalytic subunit alpha-1 (559 aa).

The Protein kinase domain maps to tyrosine 27–phenylalanine 279. Phosphothreonine is present on threonine 32. ATP-binding positions include leucine 33–valine 41 and lysine 56. The active-site Proton acceptor is aspartate 150. Threonine 183 carries the phosphothreonine; by LKB1 and CaMKK2 modification. Positions glutamate 302–glutamate 381 are AIS. Position 355 is a phosphothreonine (threonine 355). Serine 356 is subject to Phosphoserine. The residue at position 360 (serine 360) is a Phosphoserine; by ULK1. Threonine 368 bears the Phosphothreonine; by ULK1 mark. Threonine 382 carries the post-translational modification Phosphothreonine. Phosphoserine; by ULK1 is present on serine 397. Phosphoserine is present on residues serine 467 and serine 486. The span at lysine 485–arginine 505 shows a compositional bias: polar residues. The interval lysine 485–alanine 536 is disordered. Threonine 488 is modified (phosphothreonine; by ULK1). Threonine 490 is modified (phosphothreonine). Phosphoserine is present on residues serine 496, serine 508, serine 524, and serine 527. Residues proline 516–valine 535 show a composition bias toward low complexity.

Belongs to the protein kinase superfamily. CAMK Ser/Thr protein kinase family. SNF1 subfamily. As to quaternary structure, AMPK is a heterotrimer of an alpha catalytic subunit (PRKAA1 or PRKAA2), a beta (PRKAB1 or PRKAB2) and a gamma non-catalytic subunits (PRKAG1, PRKAG2 or PRKAG3). Interacts with FNIP1 and FNIP2. Mg(2+) serves as cofactor. Post-translationally, phosphorylated at Thr-183 by STK11/LKB1 in complex with STE20-related adapter-alpha (STRADA) pseudo kinase and CAB39. Also phosphorylated at Thr-183 by CAMKK2; triggered by a rise in intracellular calcium ions, without detectable changes in the AMP/ATP ratio. CAMKK1 can also phosphorylate Thr-183, but at a much lower level. Dephosphorylated by protein phosphatase 2A and 2C (PP2A and PP2C). Phosphorylated by ULK1 and ULK2; leading to negatively regulate AMPK activity and suggesting the existence of a regulatory feedback loop between ULK1, ULK2 and AMPK. Dephosphorylated by PPM1A and PPM1B. In terms of processing, ubiquitinated. Glycosylated; O-GlcNAcylated by OGT, promoting the AMP-activated protein kinase (AMPK) activity.

Its subcellular location is the cytoplasm. The protein localises to the nucleus. It catalyses the reaction L-seryl-[protein] + ATP = O-phospho-L-seryl-[protein] + ADP + H(+). The enzyme catalyses L-threonyl-[protein] + ATP = O-phospho-L-threonyl-[protein] + ADP + H(+). It carries out the reaction L-seryl-[acetyl-CoA carboxylase] + ATP = O-phospho-L-seryl-[acetyl-CoA carboxylase] + ADP + H(+). The catalysed reaction is L-seryl-[3-hydroxy-3-methylglutaryl-coenzyme A reductase] + ATP = O-phospho-L-seryl-[3-hydroxy-3-methylglutaryl-coenzyme A reductase] + ADP + H(+). It catalyses the reaction L-seryl-[tau protein] + ATP = O-phospho-L-seryl-[tau protein] + ADP + H(+). The enzyme catalyses L-threonyl-[tau protein] + ATP = O-phospho-L-threonyl-[tau protein] + ADP + H(+). With respect to regulation, activated by phosphorylation on Thr-183. Binding of AMP to non-catalytic gamma subunit (PRKAG1, PRKAG2 or PRKAG3) results in allosteric activation, inducing phosphorylation on Thr-183. AMP-binding to gamma subunit also sustains activity by preventing dephosphorylation of Thr-183. ADP also stimulates Thr-183 phosphorylation, without stimulating already phosphorylated AMPK. ATP promotes dephosphorylation of Thr-183, rendering the enzyme inactive. Under physiological conditions AMPK mainly exists in its inactive form in complex with ATP, which is much more abundant than AMP. Selectively inhibited by compound C (6-[4-(2-Piperidin-1-yl-ethoxy)-phenyl)]-3-pyridin-4-yl-pyyrazolo[1,5-a] pyrimidine. Activated by resveratrol, a natural polyphenol present in red wine, and S17834, a synthetic polyphenol. Its function is as follows. Catalytic subunit of AMP-activated protein kinase (AMPK), an energy sensor protein kinase that plays a key role in regulating cellular energy metabolism. In response to reduction of intracellular ATP levels, AMPK activates energy-producing pathways and inhibits energy-consuming processes: inhibits protein, carbohydrate and lipid biosynthesis, as well as cell growth and proliferation. AMPK acts via direct phosphorylation of metabolic enzymes, and by longer-term effects via phosphorylation of transcription regulators. Regulates lipid synthesis by phosphorylating and inactivating lipid metabolic enzymes such as ACACA, ACACB, GYS1, HMGCR and LIPE; regulates fatty acid and cholesterol synthesis by phosphorylating acetyl-CoA carboxylase (ACACA and ACACB) and hormone-sensitive lipase (LIPE) enzymes, respectively. Promotes lipolysis of lipid droplets by mediating phosphorylation of isoform 1 of CHKA (CHKalpha2). Regulates insulin-signaling and glycolysis by phosphorylating IRS1, PFKFB2 and PFKFB3. AMPK stimulates glucose uptake in muscle by increasing the translocation of the glucose transporter SLC2A4/GLUT4 to the plasma membrane, possibly by mediating phosphorylation of TBC1D4/AS160. Regulates transcription and chromatin structure by phosphorylating transcription regulators involved in energy metabolism such as CRTC2/TORC2, FOXO3, histone H2B, HDAC5, MEF2C, MLXIPL/ChREBP, EP300, HNF4A, p53/TP53, SREBF1, SREBF2 and PPARGC1A. Acts as a key regulator of glucose homeostasis in liver by phosphorylating CRTC2/TORC2, leading to CRTC2/TORC2 sequestration in the cytoplasm. In response to stress, phosphorylates 'Ser-36' of histone H2B (H2BS36ph), leading to promote transcription. Acts as a key regulator of cell growth and proliferation by phosphorylating FNIP1, TSC2, RPTOR, WDR24 and ATG1/ULK1: in response to nutrient limitation, negatively regulates the mTORC1 complex by phosphorylating RPTOR component of the mTORC1 complex and by phosphorylating and activating TSC2. Also phosphorylates and inhibits GATOR2 subunit WDR24 in response to nutrient limitation, leading to suppress glucose-mediated mTORC1 activation. In response to energetic stress, phosphorylates FNIP1, inactivating the non-canonical mTORC1 signaling, thereby promoting nuclear translocation of TFEB and TFE3, and inducing transcription of lysosomal or autophagy genes. In response to nutrient limitation, promotes autophagy by phosphorylating and activating ATG1/ULK1. In that process, it also activates WDR45/WIPI4. Phosphorylates CASP6, thereby preventing its autoprocessing and subsequent activation. In response to nutrient limitation, phosphorylates transcription factor FOXO3 promoting FOXO3 mitochondrial import. Also acts as a regulator of cellular polarity by remodeling the actin cytoskeleton; probably by indirectly activating myosin. AMPK also acts as a regulator of circadian rhythm by mediating phosphorylation of CRY1, leading to destabilize it. May regulate the Wnt signaling pathway by phosphorylating CTNNB1, leading to stabilize it. Also has tau-protein kinase activity: in response to amyloid beta A4 protein (APP) exposure, activated by CAMKK2, leading to phosphorylation of MAPT/TAU; however the relevance of such data remains unclear in vivo. Also phosphorylates CFTR, EEF2K, KLC1, NOS3 and SLC12A1. Regulates hepatic lipogenesis. Activated via SIRT3, represses sterol regulatory element-binding protein (SREBP) transcriptional activities and ATP-consuming lipogenesis to restore cellular energy balance. Upon stress, regulates mitochondrial fragmentation through phosphorylation of MTFR1L. This Mus musculus (Mouse) protein is 5'-AMP-activated protein kinase catalytic subunit alpha-1 (Prkaa1).